Consider the following 1034-residue polypeptide: Teashirt homolog 2 (1034 aa).

The interval 1 to 90 is disordered; it reads MPRRKQQAPK…NESLLSDASD (90 aa). A coiled-coil region spans residues 13–38; sequence AGYAQEEQLKEEEEIKEEEEEEDSGS. Residues 21–36 show a composition bias toward acidic residues; that stretch reads LKEEEEIKEEEEEEDS. Residues 65–90 show a composition bias toward polar residues; it reads SYQNSPGSHLSNQDAENESLLSDASD. Lys188 is covalently cross-linked (Glycyl lysine isopeptide (Lys-Gly) (interchain with G-Cter in SUMO2)). C2H2-type zinc fingers lie at residues 215-239 and 275-299; these read FRCR…ETGH and LKCM…KTKH. The interval 239–265 is disordered; sequence HYQDDNRKKDKLRPTSYSKPRKRAFQD. Glycyl lysine isopeptide (Lys-Gly) (interchain with G-Cter in SUMO2) cross-links involve residues Lys306 and Lys315. A C2H2-type 3; atypical zinc finger spans residues 380–404; that stretch reads LKCMECGSSHDTLQQLTTHMMVTGH. Residue Lys417 forms a Glycyl lysine isopeptide (Lys-Gly) (interchain with G-Cter in SUMO2) linkage. Residues 432–455 are compositionally biased toward polar residues; it reads LSEAPNSDSLAPKPSSNSASDCTA. The disordered stretch occupies residues 432–496; it reads LSEAPNSDSL…PLQKPLDPTI (65 aa). Over residues 459 to 482 the composition is skewed to basic and acidic residues; the sequence is ELKKESKKERPEETSKDEKVVKSE. Residues Lys461, Lys480, Lys497, Lys601, and Lys652 each participate in a glycyl lysine isopeptide (Lys-Gly) (interchain with G-Cter in SUMO2) cross-link. Disordered regions lie at residues 598–676 and 763–789; these read TQVK…TSAL and QPID…PPQK. The segment covering 600-668 has biased composition (basic and acidic residues); the sequence is VKKESEDKDE…KEGSEKEKPQ (69 aa). Residues Lys800 and Lys820 each participate in a glycyl lysine isopeptide (Lys-Gly) (interchain with G-Cter in SUMO2) cross-link. The segment at residues 841 to 911 is a DNA-binding region (homeobox; atypical); sequence RKGRQSNWNP…NVKYQLRKTG (71 aa). The C2H2-type 4 zinc-finger motif lies at 926–948; sequence FYCSDCASQFRTPSTYISHLESH. Lys966 participates in a covalent cross-link: Glycyl lysine isopeptide (Lys-Gly) (interchain with G-Cter in SUMO2). At Ser980 the chain carries Phosphoserine. Residues 994 to 1017 form a C2H2-type 5 zinc finger; the sequence is FKCKLCCRTFVSKHAVKLHLSKTH. The interval 1014–1034 is disordered; it reads SKTHSKSPEHHSQFVTDVDEE.

It belongs to the teashirt C2H2-type zinc-finger protein family. Interacts (via homeobox domain) with APBB1 (via PID domain 1). Post-translationally, sumoylated. Expressed in brain; strongly reduced in post-mortem elderly subjects with Alzheimer disease.

It localises to the nucleus. In terms of biological role, probable transcriptional regulator involved in developmental processes. May act as a transcriptional repressor (Potential). This Homo sapiens (Human) protein is Teashirt homolog 2 (TSHZ2).